Consider the following 86-residue polypeptide: Translation initiation factor IF-1 (86 aa).

One can recognise an S1-like domain in the interval 1 to 72; that stretch reads MPKDDVIKME…TKGRIVYRKK (72 aa).

This sequence belongs to the IF-1 family. As to quaternary structure, component of the 30S ribosomal translation pre-initiation complex which assembles on the 30S ribosome in the order IF-2 and IF-3, IF-1 and N-formylmethionyl-tRNA(fMet); mRNA recruitment can occur at any time during PIC assembly.

It localises to the cytoplasm. Functionally, one of the essential components for the initiation of protein synthesis. Stabilizes the binding of IF-2 and IF-3 on the 30S subunit to which N-formylmethionyl-tRNA(fMet) subsequently binds. Helps modulate mRNA selection, yielding the 30S pre-initiation complex (PIC). Upon addition of the 50S ribosomal subunit IF-1, IF-2 and IF-3 are released leaving the mature 70S translation initiation complex. The chain is Translation initiation factor IF-1 from Pseudothermotoga lettingae (strain ATCC BAA-301 / DSM 14385 / NBRC 107922 / TMO) (Thermotoga lettingae).